A 261-amino-acid polypeptide reads, in one-letter code: Early E1A protein (261 aa).

Residues 43 to 51 (PTLHDLYDL) are interaction with RB1 in competition with E2F1. Residues 78 to 149 (EGLDINPPPE…VNEGVKAASD (72 aa)) are interaction with UBE2I. Residues 106–110 (PDLGA) carry the PXLXP motif, interaction with host ZMYND11 motif. An LXCXE motif, interaction with host RB1 and TMEM173/STING motif is present at residues 115–119 (LRCYE). Residues 163 to 183 (CKSCEFHRNNTGMKELLCSLC) fold into a zinc finger. Positions 197–261 (SDDESPSPDS…DLSTRKLPRQ (65 aa)) are disordered. A compositionally biased stretch (low complexity) spans 203 to 212 (SPDSTTSPPE). Residues 250–254 (PLDLS) carry the PXDLS motif, CTBP-binding motif. Positions 256-261 (RKLPRQ) match the Nuclear localization signal motif.

It belongs to the adenoviridae E1A protein family. As to quaternary structure, interacts with host UBE2I; this interaction interferes with polySUMOylation. Interacts with host RB1; this interaction induces the aberrant dissociation of RB1-E2F1 complex thereby disrupting the activity of RB1 and activating E2F1-regulated genes. Interacts with host ATF7; the interaction enhances ATF7-mediated viral transactivation activity which requires the zinc binding domains of both proteins. Isoform early E1A 32 kDa protein and isoform early E1A 26 kDa protein interact (via N-terminus) with CUL1 and E3 ubiquitin ligase RBX1; these interactions inhibit RBX1-CUL1-dependent elongation reaction of ubiquitin chains and attenuate ubiquitination of SCF(FBXW7) target proteins. Interacts (via PXLXP motif) with host ZMYND11/BS69 (via MYND-type zinc finger); this interaction inhibits E1A mediated transactivation. Interacts with host EP300; this interaction stimulates the acetylation of RB1 by recruiting EP300 and RB1 into a multimeric-protein complex. Interacts with host CTBP1 and CTBP2; this interaction seems to potentiate viral replication. Interacts with host DCAF7. Interacts with host DYRK1A. Interacts with host KPNA4; this interaction allows E1A import into the host nucleus. Interacts with host EP400; this interaction stabilizes MYC. Interacts with host TBP protein; this interaction probably disrupts the TBP-TATA complex. Interacts (via LXCXE motif) with host TMEM173/STING; this interaction impairs the ability of TMEM173/STING to sense cytosolic DNA and promote the production of type I interferon (IFN-alpha and IFN-beta). Interacts (via C-terminus) with host ZBED1/hDREF (via C-terminus); the interaction is direct.

It localises to the host nucleus. In terms of biological role, plays a role in viral genome replication by driving entry of quiescent cells into the cell cycle. Stimulation of progression from G1 to S phase allows the virus to efficiently use the cellular DNA replicating machinery to achieve viral genome replication. E1A protein has both transforming and trans-activating activities. Induces the disassembly of the E2F1 transcription factor from RB1 by direct competition for the same binding site on RB1, with subsequent transcriptional activation of E2F1-regulated S-phase genes and of the E2 region of the adenoviral genome. Release of E2F1 leads to the ARF-mediated inhibition of MDM2 and causes TP53/p53 to accumulate because it is not targeted for degradation by MDM2-mediated ubiquitination anymore. This increase in TP53, in turn, would arrest the cell proliferation and direct its death but this effect is counteracted by the viral protein E1B-55K. Inactivation of the ability of RB1 to arrest the cell cycle is critical for cellular transformation, uncontrolled cellular growth and proliferation induced by viral infection. Interaction with RBX1 and CUL1 inhibits ubiquitination of the proteins targeted by SCF(FBXW7) ubiquitin ligase complex, and may be linked to unregulated host cell proliferation. The tumorigenesis-restraining activity of E1A may be related to the disruption of the host CtBP-CtIP complex through the CtBP binding motif. Interaction with host TMEM173/STING impairs the ability of TMEM173/STING to sense cytosolic DNA and promote the production of type I interferon (IFN-alpha and IFN-beta). Promotes the sumoylation of host ZBED1/hDREF with SUMO1. This chain is Early E1A protein, found in Human adenovirus B serotype 7 (HAdV-7).